The following is a 704-amino-acid chain: MRLHYITVFDPSRSTNENDTFKQLLLFHYFGTTDSIPSLNEKLSIIGVIQGIWSLTSSCVNKDGEDLEKIIELNNDIIFCIKVESRFFISLAISNISDDQSAIPLQYLSAYLWLSYRFFKLLNGSFSGFNKDFRKLTDLLNEFVIPFWNDIYLNLETVTNRSFTVMWPGFYKRANFQHSSYNPGEKNNVEESWDAIILQNILLDKKSYLGLKDILVYHLPKRTKAANRESMGTKTYGLVRNFTSDLNTLPDISNWLYHLHCTYGEISSHILTGNVHFKEELQVEEEQERSRDTNGRDEEESQEQQRREHQETTQNNTSELSLSERVIHNVTLPISFAYDAIHEVSTTTGVSGSLSMIMDYVPKPHWPFISSSNKSADKNNYSNSNDNANSNAPLMAQSEAVGGTIGNSRFGFLISPLNSDLLPSSYQALKLNLNFENSKDKEDFYNCLFWYFDDFLIVIVCDPDFNKICERDYLKDLSFQLCQSMECLNNEILNSQNCDNVESFAYVIRDNVTKEIDSSVPFGSPKFTSDESISTLQLAINGIDQFINDNSNSLSLANWNPITIMGGSNAISKKNTTEGFGNGVNDKTQKFKRKYLNFLNLMSAEKLWDLQVDVLQFLTSLQNSKRDPDYFQEERLLKLNNGVLCYIKENNSNLIIIIKNWFQNNGTSKAAKQRNRFSSDSSKGSSLFQSLGRDVTDWWESREI.

The tract at residues L281–L322 is disordered.

Belongs to the CCZ1 family. Forms a complex with MON1. Interacts with YPT7. Interacts with YPT10 with a strong preference for the GTP-associated form; may interact with other small GTPase Rab5 homologs but at much lower levels.

The protein resides in the endosome. It is found in the multivesicular body membrane. It localises to the prevacuolar compartment membrane. The protein localises to the vacuole membrane. Its subcellular location is the vesicle. The YPT7 guanine nucleotide-exchange factor (GEF) activity of the MON1-CCZ1 complex is autoinhibited by the N-terminal disordered region of MON1. Its function is as follows. In complex with MON1, is required for multiple vacuole delivery pathways including the cytoplasm to vacuole transport (Cvt), autophagy, pexophagy and endocytosis. The MON1-CCZ1 complex acts at the fusion of vesicles with the vacuole, through its regulation of the SNARE complex during the coordinated priming and docking stages of fusion, and particularly at the stage of tethering/docking. The MON1-CCZ1 complex is recruited to membranes enriched in charged lipids, particularly phosphatidylinositol 3-phosphate (PtdIns3P), by GTP-associated small GTPase RAB5 homologs (YPT10, YPT52, YPT53 and VPS21). The MON1-CCZ1 complex recruits GDP-associated small GTPase YPT7 to membranes and acts as a guanine nucleotide-exchange factor (GEF), promoting nucleotide exchange on YPT7 and triggering endosomal maturation by recruiting downstream effectors such as components of the HOPS tethering complex. The chain is Vacuolar fusion protein CCZ1 (CCZ1) from Saccharomyces cerevisiae (strain ATCC 204508 / S288c) (Baker's yeast).